The sequence spans 845 residues: DNA replication licensing factor MCM7 (845 aa).

The MCM domain occupies 410–617 (VYNRLAKSIA…DDEKLAEHVT (208 aa)). Positions 423, 463, 465, 466, 467, 568, 593, and 687 each coordinate ATP. Positions 592-595 (SRFD) match the Arginine finger motif. Residue Thr811 is modified to Phosphothreonine. The disordered stretch occupies residues 812–845 (DQEDSLVSTPKLAPQTTASANVSAQDSDIDLQDA). Ser819 is subject to Phosphoserine. The span at 825-837 (PQTTASANVSAQD) shows a compositional bias: polar residues. Ser838 carries the phosphoserine modification.

The protein belongs to the MCM family. As to quaternary structure, component of the MCM2-7 complex. The complex forms a toroidal hexameric ring with the proposed subunit order MCM2-MCM6-MCM4-MCM7-MCM3-MCM5; loaded onto DNA, forms a head-head double hexamer. Interacts with CSM1 and MCM10.

It localises to the cytoplasm. Its subcellular location is the nucleus. It catalyses the reaction ATP + H2O = ADP + phosphate + H(+). Acts as a component of the MCM2-7 complex (MCM complex) which is the putative replicative helicase essential for 'once per cell cycle' DNA replication initiation and elongation in eukaryotic cells. Core component of CDC45-MCM-GINS (CMG) helicase, the molecular machine that unwinds template DNA during replication, and around which the replisome is built. The active ATPase sites in the MCM2-7 ring are formed through the interaction surfaces of two neighboring subunits such that a critical structure of a conserved arginine finger motif is provided in trans relative to the ATP-binding site of the Walker A box of the adjacent subunit. The six ATPase active sites, however, are likely to contribute differentially to the complex helicase activity. Once loaded onto DNA, double hexamers can slide on dsDNA in the absence of ATPase activity. The protein is DNA replication licensing factor MCM7 (MCM7) of Saccharomyces cerevisiae (strain ATCC 204508 / S288c) (Baker's yeast).